The following is a 409-amino-acid chain: Arginine deiminase (409 aa).

The Amidino-cysteine intermediate role is filled by C399.

This sequence belongs to the arginine deiminase family.

The protein localises to the cytoplasm. It carries out the reaction L-arginine + H2O = L-citrulline + NH4(+). It participates in amino-acid degradation; L-arginine degradation via ADI pathway; carbamoyl phosphate from L-arginine: step 1/2. This is Arginine deiminase from Streptococcus sanguinis (strain SK36).